Reading from the N-terminus, the 145-residue chain is Large ribosomal subunit protein uL13 (145 aa).

It belongs to the universal ribosomal protein uL13 family. In terms of assembly, part of the 50S ribosomal subunit. Interacts weakly with proteins L3 and L6.

This protein is one of the early assembly proteins of the 50S ribosomal subunit. Binds to 23S rRNA. The chain is Large ribosomal subunit protein uL13 from Haloarcula marismortui (strain ATCC 43049 / DSM 3752 / JCM 8966 / VKM B-1809) (Halobacterium marismortui).